Here is a 141-residue protein sequence, read N- to C-terminus: Hemoglobin subunit alpha (141 aa).

In terms of domain architecture, Globin spans 1–141 (VLSASDKTNL…VSTVLTSKYR (141 aa)). Serine 3 is modified (phosphoserine). The residue at position 7 (lysine 7) is an N6-succinyllysine. Threonine 8 bears the Phosphothreonine mark. Lysine 11 bears the N6-succinyllysine mark. Residue lysine 16 is modified to N6-acetyllysine; alternate. An N6-succinyllysine; alternate modification is found at lysine 16. Tyrosine 24 is subject to Phosphotyrosine. Serine 35 carries the post-translational modification Phosphoserine. An N6-succinyllysine modification is found at lysine 40. A Phosphoserine modification is found at serine 49. Residue histidine 58 participates in O2 binding. Histidine 87 serves as a coordination point for heme b. Serine 102 is modified (phosphoserine). Threonine 108 is modified (phosphothreonine). The residue at position 124 (serine 124) is a Phosphoserine. 2 positions are modified to phosphothreonine: threonine 134 and threonine 137. A Phosphoserine modification is found at serine 138.

Belongs to the globin family. Heterotetramer of two alpha chains and two beta chains. In terms of tissue distribution, red blood cells.

Involved in oxygen transport from the lung to the various peripheral tissues. The protein is Hemoglobin subunit alpha of Blarina brevicauda (Northern short-tailed shrew).